The chain runs to 302 residues: ATP synthase gamma chain (302 aa).

This sequence belongs to the ATPase gamma chain family. F-type ATPases have 2 components, CF(1) - the catalytic core - and CF(0) - the membrane proton channel. CF(1) has five subunits: alpha(3), beta(3), gamma(1), delta(1), epsilon(1). CF(0) has three main subunits: a, b and c.

It is found in the cell inner membrane. Functionally, produces ATP from ADP in the presence of a proton gradient across the membrane. The gamma chain is believed to be important in regulating ATPase activity and the flow of protons through the CF(0) complex. The sequence is that of ATP synthase gamma chain from Bartonella bacilliformis (strain ATCC 35685 / KC583 / Herrer 020/F12,63).